A 152-amino-acid chain; its full sequence is Deoxyuridine 5'-triphosphate nucleotidohydrolase (152 aa).

Residues 71 to 73 (RSG), Asn-84, 88 to 90 (LID), and Met-98 contribute to the substrate site.

This sequence belongs to the dUTPase family. Requires Mg(2+) as cofactor.

The catalysed reaction is dUTP + H2O = dUMP + diphosphate + H(+). It functions in the pathway pyrimidine metabolism; dUMP biosynthesis; dUMP from dCTP (dUTP route): step 2/2. This enzyme is involved in nucleotide metabolism: it produces dUMP, the immediate precursor of thymidine nucleotides and it decreases the intracellular concentration of dUTP so that uracil cannot be incorporated into DNA. This is Deoxyuridine 5'-triphosphate nucleotidohydrolase from Shewanella woodyi (strain ATCC 51908 / MS32).